The primary structure comprises 275 residues: Putative ankyrin repeat protein L715 (275 aa).

ANK repeat units follow at residues Asn-94–Tyr-123, Asn-124–Asp-153, Ile-155–Pro-183, and Ile-184–Thr-213. Residues Asn-253–Asn-275 are disordered. Residues Asp-255–Asn-275 are compositionally biased toward acidic residues.

This is Putative ankyrin repeat protein L715 from Acanthamoeba polyphaga mimivirus (APMV).